We begin with the raw amino-acid sequence, 207 residues long: Ras-related protein Rab-8B (207 aa).

Residues S17, G18, V19, G20, K21, T22, C23, T35, S39, and T40 each coordinate GTP. A Mg(2+)-binding site is contributed by T22. 2 consecutive short sequence motifs (switch) follow at residues D31 to F45 and D63 to G80. Mg(2+) is bound by residues T40 and D63. G66 is a binding site for GTP. T72 carries the phosphothreonine modification. Residues N121, K122, D124, A152, and K153 each coordinate GTP. S180 is subject to Phosphoserine. The residue at position 204 (C204) is a Cysteine methyl ester. C204 is lipidated: S-geranylgeranyl cysteine. A propeptide spans L205 to L207 (removed in mature form).

This sequence belongs to the small GTPase superfamily. Rab family. As to quaternary structure, associated with actin, delta-catenin and alpha and beta tubulins. Interacts with OTOF. Interacts with PEX5R. Interacts with RAB3IP. Interacts with VIM. Interacts with CDH1. Interacts with MICALL2. Interacts with GDI1, GDI2, CHML and CHM; phosphorylation at Thr-72 disrupts these interactions. Interacts with MICAL1. Mg(2+) serves as cofactor. In terms of processing, phosphorylation of Thr-72 in the switch II region by LRRK2 prevents the association of RAB regulatory proteins, including CHM, CHML and RAB GDP dissociation inhibitors GDI1 and GDI2.

The protein localises to the cell membrane. It localises to the cytoplasmic vesicle. The protein resides in the phagosome membrane. Its subcellular location is the endosome membrane. It carries out the reaction GTP + H2O = GDP + phosphate + H(+). With respect to regulation, regulated by guanine nucleotide exchange factors (GEFs) including RAB3IP/RABIN8 which promotes the exchange of bound GDP for free GTP. Regulated by GTPase activating proteins (GAPs) which increase the GTP hydrolysis activity. Inhibited by GDP dissociation inhibitors (GDIs). Functionally, the small GTPases Rab are key regulators of intracellular membrane trafficking, from the formation of transport vesicles to their fusion with membranes. Rabs cycle between an inactive GDP-bound form and an active GTP-bound form that is able to recruit to membranes different sets of downstream effectors directly responsible for vesicle formation, movement, tethering and fusion. RAB8B may be involved in polarized vesicular trafficking and neurotransmitter release. May participate in cell junction dynamics in Sertoli cells. May also participate in the export of a subset of neosynthesized proteins through a Rab8-Rab10-Rab11-dependent endososomal export route. In Pongo abelii (Sumatran orangutan), this protein is Ras-related protein Rab-8B (RAB8B).